Here is a 319-residue protein sequence, read N- to C-terminus: Zinc finger protein C19B12.07c (319 aa).

A C2H2-type zinc finger spans residues 146 to 170 (FRCLCCHVPCKNKKLLREHMNNKRH).

The protein belongs to the ZNF277 family.

It is found in the nucleus. The protein is Zinc finger protein C19B12.07c of Schizosaccharomyces pombe (strain 972 / ATCC 24843) (Fission yeast).